The sequence spans 428 residues: Serine hydroxymethyltransferase (428 aa).

120–122 (GHI) provides a ligand contact to (6S)-5,6,7,8-tetrahydrofolate. Lys-226 carries the post-translational modification N6-(pyridoxal phosphate)lysine.

The protein belongs to the SHMT family. Homodimer. It depends on pyridoxal 5'-phosphate as a cofactor.

The protein localises to the cytoplasm. It carries out the reaction 5,10-methylenetetrahydromethanopterin + glycine + H2O = 5,6,7,8-tetrahydromethanopterin + L-serine. It participates in amino-acid biosynthesis; glycine biosynthesis; glycine from L-serine: step 1/1. In terms of biological role, catalyzes the reversible interconversion of serine and glycine with tetrahydromethanopterin (H4MPT) serving as the one-carbon carrier. Also exhibits a pteridine-independent aldolase activity toward beta-hydroxyamino acids, producing glycine and aldehydes, via a retro-aldol mechanism. The sequence is that of Serine hydroxymethyltransferase from Methanopyrus kandleri (strain AV19 / DSM 6324 / JCM 9639 / NBRC 100938).